We begin with the raw amino-acid sequence, 117 residues long: MQTIEIGNKAELQACKFLHTQALEILAHNFKALPYGEIDIIALDKDTLVFIEVKYRSKTKFAQAEEMLTYSKQQKLVNSASIYLQHNPQYQDYQCRFDLIAINESNINWIKNAFGVI.

The protein belongs to the UPF0102 family.

The protein is UPF0102 protein FTW_1281 of Francisella tularensis subsp. tularensis (strain WY96-3418).